Reading from the N-terminus, the 136-residue chain is MAQKPLSTTAAERMNLVAQDEIWKYRLRAESEARQNWPAKWGYLTTSMKELLEGEEEPQTPKPKPELPSHFYVRPVSPMDKHIKILPSPPVPKTTQGFIGWRSGKPALYCLEKYSEVCSCKGAYARELCWPEQGVH.

Its subcellular location is the cell projection. The protein localises to the cilium. The chain is Ciliary microtubule inner protein 1 (Cimip1) from Mus musculus (Mouse).